The chain runs to 297 residues: MAAVVGTGSDGGGDESGDRRTADAADADGDGDGGERAWLRFKADVRACLADLRNRKGGITLHRAIVKDMVSASSNPGARRSSSSVVKMAREELDRLMPFLLDDFLDNMPGLKAAFTGKAEPGAEGDDGEDEEEGEAQGVGKDAVDSSSSSSGGGGVLSCTAWQQVLGRTVPAVSPTLALVLACGYLAMAPRQYRALALVPMILPGKTGGGVDGALTREGLSLLKKLRPGISGLADKDKQWLEWVIARLAAEFAVQPAGDGHEPEPKRPELPPTAVQREPPAEEQHKPTAGARDSPNM.

Disordered regions lie at residues 1 to 34 (MAAV…GDGG), 115 to 151 (FTGK…SSSS), and 255 to 297 (QPAG…SPNM). Positions 123–135 (AEGDDGEDEEEGE) are enriched in acidic residues. Residues 136 to 150 (AQGVGKDAVDSSSSS) show a composition bias toward low complexity. Residues 259–269 (DGHEPEPKRPE) show a composition bias toward basic and acidic residues.

This chain is Ezy-1 protein (Ezy-1), found in Chlamydomonas reinhardtii (Chlamydomonas smithii).